We begin with the raw amino-acid sequence, 669 residues long: Filensin (669 aa).

Residues 1–33 form a head region; that stretch reads MYRRSYVFQARQERYERAQPAGPAAQPGGTAPG. Ser-5 bears the Phosphoserine mark. The region spanning 33-318 is the IF rod domain; sequence GLAALQALGE…RIIEIEGSRL (286 aa). Residues 34 to 68 are coil 1A; that stretch reads LAALQALGERVAVQVQRARALQQRHAGLRRQLDAF. Position 35 is an N-acetylalanine (Ala-35). A linker 1 region spans residues 69–77; the sequence is QRLGEQPGP. Positions 78-177 are coil 1B; sequence EDALARHVEA…RYKKNLLEIQ (100 aa). Positions 178–194 are linker 12; the sequence is TYITVLQQIVQTAPQVS. Residues 195 to 318 form a coil 2 region; the sequence is LVTGMRESGL…RIIEIEGSRL (124 aa). Residues 319–669 form a tail region; the sequence is SSVFIETPIS…GEKSLPDTRA (351 aa). Ser-339 carries the phosphoserine modification. Disordered regions lie at residues 380–435, 449–468, and 505–618; these read VEET…GGQI, RVSG…FTKG, and HHDG…KALS. The segment covering 408–417 has biased composition (gly residues); it reads SQPGAGGGHG. Gly-432 is lipidated: N-myristoyl glycine. A Phosphoserine modification is found at Ser-513. Positions 545–570 are enriched in basic and acidic residues; sequence NGLRAKEPKDLEEKDDDGKKEAEGSR. The span at 583–593 shows a compositional bias: polar residues; it reads PSTSHSQTSGS. The residue at position 585 (Thr-585) is a Phosphothreonine.

It belongs to the intermediate filament family. In terms of assembly, part of a complex required for lens intermediate filament formation composed of BFSP1, BFSP2 and CRYAA. Identified in a complex that contains VIM, EZR, AHNAK, BFSP1, BFSP2, ANK2, PLEC, PRX and spectrin. Found in a complex composed of PPL (via C-terminal linker domain), BFSP1 and BFSP2 in the retinal lens. Within the complex interacts with BFSP2. Interacts (via C-terminus) with MIP (via C-terminus) in aged lens fiber cells. Proteolytically cleaved during lens cell fiber differentiation with increased fragmentation as fiber cell age increases. Post-translationally, myristoylated at Gly-432 following proteolytic cleavage at Asp-431. In terms of processing, acetylated at Ala-35 following proteolytic cleavage at Leu-34. Detected in eye lens fiber cells (at protein level). Expressed in retinal lens epithelial cells (at protein level).

The protein resides in the cell membrane. Its subcellular location is the cytoplasm. The protein localises to the cytoskeleton. It localises to the cell cortex. Functionally, required for the correct formation of lens intermediate filaments as part of a complex composed of BFSP1, BFSP2 and CRYAA. Involved in altering the calcium regulation of MIP water permeability. This Mus musculus (Mouse) protein is Filensin (Bfsp1).